The primary structure comprises 248 residues: Acetylglutamate kinase (248 aa).

Substrate is bound by residues 41–42 (GG), arginine 63, and asparagine 155.

This sequence belongs to the acetylglutamate kinase family. ArgB subfamily.

The protein resides in the cytoplasm. The enzyme catalyses N-acetyl-L-glutamate + ATP = N-acetyl-L-glutamyl 5-phosphate + ADP. It participates in amino-acid biosynthesis; L-arginine biosynthesis; N(2)-acetyl-L-ornithine from L-glutamate: step 2/4. In terms of biological role, catalyzes the ATP-dependent phosphorylation of N-acetyl-L-glutamate. The chain is Acetylglutamate kinase from Lactiplantibacillus plantarum (strain ATCC BAA-793 / NCIMB 8826 / WCFS1) (Lactobacillus plantarum).